Reading from the N-terminus, the 809-residue chain is TLR4 interactor with leucine rich repeats (809 aa).

Positions 1-25 (MEGVGAVRFWLVVCGCLAFPPRAES) are cleaved as a signal peptide. Positions 26-57 (VCPERCDCQHPQHLLCTNRGLRAVPKTSSLPS) constitute an LRRNT domain. Topologically, residues 26–694 (VCPERCDCQH…AGGRGGVDYQ (669 aa)) are extracellular. LRR repeat units follow at residues 61-81 (VLTY…DFHR), 84-105 (QLRR…TFEK), 108-129 (RLEE…TLAP), 132-153 (KLRI…SFEG), 156-177 (SLVK…VFAP), 180-201 (NLLY…AFSQ), 204-223 (KLRF…RHAA), 230-251 (SLST…VFQH), 254-275 (RLGL…AFWG), 278-298 (ALRE…TLLE), 302-323 (SLEA…TFGH), and 326-347 (RLRE…IFAA). N-linked (GlcNAc...) asparagine glycosylation is present at Asn73. An LRRCT domain is found at 359-416 (NGWTCDCRLRGLKRWMGNWHSQGRLLTVFVQCRHPPALRGKYLDYLDDQLLQNGSCVD). Asn411 is a glycosylation site (N-linked (GlcNAc...) asparagine). Disordered stretches follow at residues 412–462 (GSCV…RGRL) and 483–563 (RLSR…SAVQ). Positions 421-436 (PTAGSRQWPLPTSSEE) are enriched in polar residues. Over residues 488–506 (GPGPHQGPSAAAPGSAPQS) the composition is skewed to low complexity. Over residues 521–543 (ANLSQTEPTPTSEPASGTPSARD) the composition is skewed to polar residues. A compositionally biased stretch (low complexity) spans 554 to 563 (ASEQQESAVQ). Asn587 carries N-linked (GlcNAc...) asparagine glycosylation. Residues 695-715 (LLTLVLLAVNALLVLLALAAW) form a helical membrane-spanning segment. Topologically, residues 716 to 809 (GSRWLRRKLR…EDHLLQRFAD (94 aa)) are cytoplasmic. Phosphoserine is present on Ser796.

As to quaternary structure, belongs to the lipopolysaccharide (LPS) receptor, a multi-protein complex containing at least CD14, MD-2 and TLR4. Interacts with TLR4; this interaction is greatly enhanced by LPS stimulation. Interacts with LPS. In terms of processing, N-glycolysaled. As to expression, highly expressed in brain, spinal cord and lung.

Its subcellular location is the membrane. Functionally, component of the TLR4 signaling complex. Mediates the innate immune response to bacterial lipopolysaccharide (LPS) leading to cytokine secretion. This is TLR4 interactor with leucine rich repeats (Tril) from Mus musculus (Mouse).